The following is a 326-amino-acid chain: MILCCGEALIDMLPRDTTLGEKGFAPYAGGAIFNTAIALGRLGIPTAFFTGIADDMMGEILLETLKASNVDYSPCAITPRPSTIAFVKLVNGQATYAFYDEGTAGRMITTADLPDLGDDCEALHFGAISLIPSPCGETYEALLDREAASRVISLDPNIRPGFIKDKPSHMARIKRMAAKSDIVKFSDEDLDWFGLQGDHDALAAHWLNHGAKLVVITKGAEGASGYTKDRKVTVPSERVTVVDTVGAGDTFDAGILASLKMDNLLTKRQVASLDEQALRNGPDPRRQSRRRHRLPRRRQSTLGARDWSLRLEQDSDPHPPDDTFSP.

The segment at 275–326 is disordered; the sequence is EQALRNGPDPRRQSRRRHRLPRRRQSTLGARDWSLRLEQDSDPHPPDDTFSP. A compositionally biased stretch (basic residues) spans 287–299; it reads QSRRRHRLPRRRQ. Residues 307–326 are compositionally biased toward basic and acidic residues; it reads WSLRLEQDSDPHPPDDTFSP.

It belongs to the carbohydrate kinase PfkB family.

It carries out the reaction D-fructose + ATP = D-fructose 6-phosphate + ADP + H(+). In Rhizobium leguminosarum bv. trifolii, this protein is Fructokinase (frk).